Consider the following 102-residue polypeptide: uncharacterized protein (102 aa).

A helical membrane pass occupies residues 77 to 96 (FFSACVAKSYSSFFISICIL).

It is found in the membrane. This is an uncharacterized protein from Saccharomyces cerevisiae (strain ATCC 204508 / S288c) (Baker's yeast).